Reading from the N-terminus, the 293-residue chain is Bifunctional protein FolD (293 aa).

Residues 165-167 (GRS), serine 190, and isoleucine 231 each bind NADP(+).

The protein belongs to the tetrahydrofolate dehydrogenase/cyclohydrolase family. In terms of assembly, homodimer.

It catalyses the reaction (6R)-5,10-methylene-5,6,7,8-tetrahydrofolate + NADP(+) = (6R)-5,10-methenyltetrahydrofolate + NADPH. It carries out the reaction (6R)-5,10-methenyltetrahydrofolate + H2O = (6R)-10-formyltetrahydrofolate + H(+). It functions in the pathway one-carbon metabolism; tetrahydrofolate interconversion. Catalyzes the oxidation of 5,10-methylenetetrahydrofolate to 5,10-methenyltetrahydrofolate and then the hydrolysis of 5,10-methenyltetrahydrofolate to 10-formyltetrahydrofolate. In Parasynechococcus marenigrum (strain WH8102), this protein is Bifunctional protein FolD.